The primary structure comprises 121 residues: Small ribosomal subunit protein uS13 (121 aa).

Residues 93–121 are disordered; that stretch reads RHLPVRGQNTKNNARTRKGPAVSIAGKKK.

Belongs to the universal ribosomal protein uS13 family. Part of the 30S ribosomal subunit. Forms a loose heterodimer with protein S19. Forms two bridges to the 50S subunit in the 70S ribosome.

Its function is as follows. Located at the top of the head of the 30S subunit, it contacts several helices of the 16S rRNA. In the 70S ribosome it contacts the 23S rRNA (bridge B1a) and protein L5 of the 50S subunit (bridge B1b), connecting the 2 subunits; these bridges are implicated in subunit movement. Contacts the tRNAs in the A and P-sites. This chain is Small ribosomal subunit protein uS13, found in Ligilactobacillus salivarius (strain UCC118) (Lactobacillus salivarius).